A 307-amino-acid polypeptide reads, in one-letter code: Dioxygenase swnH1 (307 aa).

Positions 149, 151, and 227 each coordinate Fe cation.

The protein belongs to the PhyH family. As to quaternary structure, homodimer. It depends on Fe cation as a cofactor.

The protein operates within mycotoxin biosynthesis. Functionally, dioxygenase; part of the gene cluster that mediates the biosynthesis of swainsonine (SW), a cytotoxic fungal alkaloid and a potential cancer therapy drug. Swainsonine production occurs via a multibranched pathway and is dispensable for fungal colonization of plants and infection of insect hosts. The first step of swainsonine biosynthesis is the production of the precursor pipecolic acid (PA) via conversion of L-lysine (Lys) to 1-piperideine-6-carboxylate (P6C) by the aminotransferase swnA, the latter being further reduced to PA by the reductase swnR. PA can be converted from lysine by both the SW biosynthetic cluster and the unclustered genes such as lysine cyclodeaminase. The PKS-NRPS hybrid synthetase swnK uptakes and condensates PA and malonyl-CoA with and without skipping of the ketoreductase (KR) domain in order to produce 3 intermediates, 1-oxoindolizidine, (1S)-1-hydroxyindolizin, and (1R)-1-hydroxyindolizine; with the transisomer (1S)-1-hydroxyindolizin being predominant. The terminal thioester reductase (TE) domain of swnK is involved in reduction of the thioester bond to release the intermediate aldehydes. The oxidoreductase swnN could contribute to the reduction of 1-oxoindolizidine to (1S)-1-hydroxyindolizin and (1R)-1-hydroxyindolizine, contributing to the major route of SW production. The dioxygenase swnH2 would be responsible for the oxidization of (1R)-1-hydroxyindolizine into (1R,2S)-1,2-dihydroxyindolizine and of (1S)-1-hydroxyindolizin to yield both (1R,2S)-1,2-dihydroxyindolizine and (1S,2S)-1,2-dihydroxyindolizine. The dioxygenase swnH1 then performs the conversion of the 1,2-dihydroxyindolizine epimers to SW. In Metarhizium robertsii (strain ARSEF 23 / ATCC MYA-3075) (Metarhizium anisopliae (strain ARSEF 23)), this protein is Dioxygenase swnH1.